The sequence spans 295 residues: Cuticle collagen 3A3 (295 aa).

A disordered region spans residues 81–278; sequence AITSSEENGG…GRPGEPGICP (198 aa). Pro residues-rich tracts occupy residues 97-109 and 146-160; these read PGPP…PGRP and AGPP…PPGD. Triple-helical region regions lie at residues 98-127, 147-203, and 212-277; these read GPPG…PGLP, GPPG…VGED, and GDQG…PGIC. Residues 172 to 182 are compositionally biased toward low complexity; it reads QDGIPGQQGTK. A compositionally biased stretch (pro residues) spans 217–228; it reads PGEPGPEGPPGE. The segment covering 229–244 has biased composition (low complexity); the sequence is PGLQGPVGMPGQVGQK. Over residues 261–271 the composition is skewed to pro residues; the sequence is RPGPPGPPGRP.

It belongs to the cuticular collagen family.

Nematode cuticles are composed largely of collagen-like proteins. The cuticle functions both as an exoskeleton and as a barrier to protect the worm from its environment. The polypeptide is Cuticle collagen 3A3 (3A3) (Haemonchus contortus (Barber pole worm)).